Consider the following 402-residue polypeptide: Acyl-[acyl-carrier-protein] desaturase 3, chloroplastic (402 aa).

The N-terminal 32 residues, 1–32 (MSLTGCLPPRPPCSMRRRTSGGGASVSPVVAM), are a transit peptide targeting the chloroplast. Positions 1 to 66 (MSLTGCLPPR…EVPPQVTHTL (66 aa)) are disordered. E139, E178, H181, E231, E264, and H267 together coordinate Fe cation.

The protein belongs to the fatty acid desaturase type 2 family. In terms of assembly, homodimer. Requires Fe(2+) as cofactor.

It is found in the plastid. The protein resides in the chloroplast. It participates in lipid metabolism; fatty acid metabolism. Functionally, introduces a cis double bond in the acyl chain of an acyl-[acyl-carrier protein]. The protein is Acyl-[acyl-carrier-protein] desaturase 3, chloroplastic of Oryza sativa subsp. japonica (Rice).